The following is a 186-amino-acid chain: Tumor necrosis factor alpha-induced protein 8-like protein 1 (186 aa).

A coiled-coil region spans residues 37-70; that stretch reads EVLDELYRVTKEYTRNRKEAQKIIKNLIKMVVKL.

Belongs to the TNFAIP8 family.

It is found in the cytoplasm. In Danio rerio (Zebrafish), this protein is Tumor necrosis factor alpha-induced protein 8-like protein 1 (tnfaip8l1).